A 332-amino-acid polypeptide reads, in one-letter code: GDP-mannose transporter 2 (332 aa).

At 1 to 12 the chain is on the cytoplasmic side; that stretch reads MSSLKVSQQDKK. Residues 13–33 form a helical membrane-spanning segment; it reads WVNSGSVAILAYCASSILMTI. Topologically, residues 34 to 47 are lumenal; the sequence is TNKVVMSDRTFNMN. Residues 48 to 68 form a helical membrane-spanning segment; that stretch reads FLLLFIQSLVCVITLLVLKVL. Residues 69–84 are Cytoplasmic-facing; sequence GSVNFRSFNKTDARNW. A helical membrane pass occupies residues 85-105; sequence FPISICLVLMIFTSSKSLQYL. At 106–108 the chain is on the lumenal side; that stretch reads SVP. Residues 109–129 form a helical membrane-spanning segment; the sequence is VYTIFKNLTIIVIAYGEVLFF. At 130 to 131 the chain is on the cytoplasmic side; the sequence is GS. A helical membrane pass occupies residues 132–152; sequence SVGNMELGSFALMIVSSLIAA. The Lumenal segment spans residues 153–174; sequence HGDYLHSVERLKKMLGPNVSFS. N-linked (GlcNAc...) asparagine glycosylation is present at N170. Residues 175–195 traverse the membrane as a helical segment; that stretch reads FIVNIGYFWIAANCFASALFV. Topologically, residues 196–211 are cytoplasmic; the sequence is LLMRKRIQVTNFKDFD. Residues 212-232 traverse the membrane as a helical segment; that stretch reads TMFYNNVLSLPLLLLGSYLFE. The Lumenal portion of the chain corresponds to 233-248; that stretch reads DWSQENLLPHVDIDNL. A glycan (N-linked (GlcNAc...) asparagine) is linked at N247. The chain crosses the membrane as a helical span at residues 249-269; it reads STMIISGLASVAISYCSGWCV. Residues 270–274 are Cytoplasmic-facing; the sequence is RVTSS. Residues 275-295 form a helical membrane-spanning segment; sequence TTYSMVGALNKLPIALTGFLF. Residues 296-300 lie on the Lumenal side of the membrane; sequence NDAAR. A helical transmembrane segment spans residues 301-321; that stretch reads NLSSAASILLGFASGIIYAVA. Topologically, residues 322–332 are cytoplasmic; it reads KQKKLQNSEKI.

It belongs to the TPT transporter family. SLC35D subfamily. Homooligomer.

Its subcellular location is the golgi apparatus membrane. It localises to the cytoplasmic vesicle membrane. The protein resides in the endoplasmic reticulum membrane. Its function is as follows. Involved in the import of GDP-mannose from the cytoplasm into the Golgi lumen. This is GDP-mannose transporter 2 (VRG4-2) from Vanderwaltozyma polyspora (strain ATCC 22028 / DSM 70294 / BCRC 21397 / CBS 2163 / NBRC 10782 / NRRL Y-8283 / UCD 57-17) (Kluyveromyces polysporus).